The chain runs to 304 residues: Glycine--tRNA ligase alpha subunit (304 aa).

The protein belongs to the class-II aminoacyl-tRNA synthetase family. In terms of assembly, tetramer of two alpha and two beta subunits.

The protein localises to the cytoplasm. The catalysed reaction is tRNA(Gly) + glycine + ATP = glycyl-tRNA(Gly) + AMP + diphosphate. In Serratia proteamaculans (strain 568), this protein is Glycine--tRNA ligase alpha subunit.